Here is a 248-residue protein sequence, read N- to C-terminus: Triosephosphate isomerase (248 aa).

Residues N12 and K14 each contribute to the substrate site. The interval 16–30 (NGDRAGIDSIISFMK) is igE-binding. The active-site Electrophile is the H95. The Proton acceptor role is filled by E165. 2 igE-binding regions span residues 166–180 (PVWA…TPEQ) and 205–219 (RIIY…NCKE).

Belongs to the triosephosphate isomerase family. As to quaternary structure, homodimer. As to expression, expressed in skeletal muscle (at protein level).

The protein localises to the cytoplasm. The catalysed reaction is D-glyceraldehyde 3-phosphate = dihydroxyacetone phosphate. It catalyses the reaction dihydroxyacetone phosphate = methylglyoxal + phosphate. Its pathway is carbohydrate biosynthesis; gluconeogenesis. It functions in the pathway carbohydrate degradation; glycolysis; D-glyceraldehyde 3-phosphate from glycerone phosphate: step 1/1. Triosephosphate isomerase is an extremely efficient metabolic enzyme that catalyzes the interconversion between dihydroxyacetone phosphate (DHAP) and D-glyceraldehyde-3-phosphate (G3P) in glycolysis and gluconeogenesis. In terms of biological role, it is also responsible for the non-negligible production of methylglyoxal a reactive cytotoxic side-product that modifies and can alter proteins, DNA and lipids. The chain is Triosephosphate isomerase from Procambarus clarkii (Red swamp crayfish).